Consider the following 975-residue polypeptide: Ionotropic receptor 21a (975 aa).

A signal peptide spans 1–21 (MFKRIVLAVINLVFLIVSTTA). N-linked (GlcNAc...) asparagine glycans are attached at residues asparagine 67, asparagine 177, and asparagine 355. Residues 433–453 (WPVWVAVILIYLLAIFPLAFS) traverse the membrane as a helical segment. A glycan (N-linked (GlcNAc...) asparagine) is linked at asparagine 464. Residues 505-525 (IYWVFTIIITACYTGSIIAFI) traverse the membrane as a helical segment. N-linked (GlcNAc...) asparagine glycans are attached at residues asparagine 561, asparagine 586, and asparagine 611. A helical transmembrane segment spans residues 708-728 (MFLLMLFGYVVALGVLISEWV). 2 disordered regions span residues 757 to 839 (ATAG…HSLS) and 911 to 938 (SPHSARADESSDAGGLVRRGAGRERKEM). Composition is skewed to polar residues over residues 760–777 (GSDNGSLPVSSPTSTNRN) and 788–800 (VENSLPASGNGSA). Asparagine 763 and asparagine 797 each carry an N-linked (GlcNAc...) asparagine glycan.

Belongs to the glutamate-gated ion channel (TC 1.A.10.1) family. In terms of tissue distribution, in both female and male antenna, expressed specifically in 3 sensory neurons of flagellomere 13 segment (at protein level).

The protein localises to the cell projection. It is found in the cilium membrane. Integral part of a neural sensory system in the antenna that provides the neural basis for the response to environmental changes in temperature (thermosensation). Specifically, required for thermosensing by the cooling cell. Plays a role in heat seeking and heat-stimulated blood feeding behavior. This Anopheles gambiae (African malaria mosquito) protein is Ionotropic receptor 21a.